A 318-amino-acid polypeptide reads, in one-letter code: Acetyl-coenzyme A carboxylase carboxyl transferase subunit alpha (318 aa).

Residues 34–295 enclose the CoA carboxyltransferase C-terminal domain; it reads SIEEEITKLR…KATIKQQLAQ (262 aa).

It belongs to the AccA family. Acetyl-CoA carboxylase is a heterohexamer composed of biotin carboxyl carrier protein (AccB), biotin carboxylase (AccC) and two subunits each of ACCase subunit alpha (AccA) and ACCase subunit beta (AccD).

Its subcellular location is the cytoplasm. It catalyses the reaction N(6)-carboxybiotinyl-L-lysyl-[protein] + acetyl-CoA = N(6)-biotinyl-L-lysyl-[protein] + malonyl-CoA. The protein operates within lipid metabolism; malonyl-CoA biosynthesis; malonyl-CoA from acetyl-CoA: step 1/1. Its function is as follows. Component of the acetyl coenzyme A carboxylase (ACC) complex. First, biotin carboxylase catalyzes the carboxylation of biotin on its carrier protein (BCCP) and then the CO(2) group is transferred by the carboxyltransferase to acetyl-CoA to form malonyl-CoA. This chain is Acetyl-coenzyme A carboxylase carboxyl transferase subunit alpha, found in Pseudoalteromonas atlantica (strain T6c / ATCC BAA-1087).